Reading from the N-terminus, the 257-residue chain is Imidazole glycerol phosphate synthase subunit HisF (257 aa).

Catalysis depends on residues Asp12 and Asp131.

The protein belongs to the HisA/HisF family. As to quaternary structure, heterodimer of HisH and HisF.

It is found in the cytoplasm. The enzyme catalyses 5-[(5-phospho-1-deoxy-D-ribulos-1-ylimino)methylamino]-1-(5-phospho-beta-D-ribosyl)imidazole-4-carboxamide + L-glutamine = D-erythro-1-(imidazol-4-yl)glycerol 3-phosphate + 5-amino-1-(5-phospho-beta-D-ribosyl)imidazole-4-carboxamide + L-glutamate + H(+). It functions in the pathway amino-acid biosynthesis; L-histidine biosynthesis; L-histidine from 5-phospho-alpha-D-ribose 1-diphosphate: step 5/9. Functionally, IGPS catalyzes the conversion of PRFAR and glutamine to IGP, AICAR and glutamate. The HisF subunit catalyzes the cyclization activity that produces IGP and AICAR from PRFAR using the ammonia provided by the HisH subunit. This is Imidazole glycerol phosphate synthase subunit HisF from Rhodococcus opacus (strain B4).